A 452-amino-acid polypeptide reads, in one-letter code: Caspase-2 (452 aa).

An N-acetylalanine modification is found at Ala-2. Positions 2–169 (AASSGRSQSS…TMEHSLDNGD (168 aa)) are excised as a propeptide. The CARD domain maps to 32 to 121 (MHPDHQETLK…GHLEDLLLTT (90 aa)). At Ser-157 the chain carries Phosphoserine. Residues His-277 and Cys-320 contribute to the active site. The propeptide occupies 326 to 333 (DRGVDQQD). The span at 327-336 (RGVDQQDGKN) shows a compositional bias: basic and acidic residues. Residues 327–349 (RGVDQQDGKNHAQSPGCEESDAG) form a disordered region. Ser-340 is subject to Phosphoserine.

This sequence belongs to the peptidase C14A family. As to quaternary structure, heterotetramer that consists of two anti-parallel arranged heterodimers, each one formed by a p18 subunit and a p12 subunit. Forms a complex named the PIDDosome with PIDD1 and CRADD. Interacts with NOL3 (via CARD domain); inhibits CASP2 activity in a phosphorylation-dependent manner. The mature protease can process its own propeptide, but not that of other caspases.

The enzyme catalyses Strict requirement for an Asp residue at P1, with 316-Asp being essential for proteolytic activity and has a preferred cleavage sequence of Val-Asp-Val-Ala-Asp-|-.. Its function is as follows. Involved in the activation cascade of caspases responsible for apoptosis execution. Might function by either activating some proteins required for cell death or inactivating proteins necessary for cell survival. Associates with PIDD1 and CRADD to form the PIDDosome, a complex that activates CASP2 and triggers apoptosis in response to genotoxic stress. This chain is Caspase-2 (Casp2), found in Rattus norvegicus (Rat).